The primary structure comprises 162 residues: MNTKFPITAKGFKKLEHELKHLKHVERKKISEDIAEAREHGDLSENAEYEAAREKQAFIEGRIKELEDMAARAEIIDISKLSGDNIKFGATVTLIDDDTEEKVTYIVVGEYEADITRKRVSIASPIAKALIGKSVGDFVEVTTPKGSKSYEVVEVEYKALEL.

A coiled-coil region spans residues 45–75 (ENAEYEAAREKQAFIEGRIKELEDMAARAEI).

It belongs to the GreA/GreB family.

Its function is as follows. Necessary for efficient RNA polymerase transcription elongation past template-encoded arresting sites. The arresting sites in DNA have the property of trapping a certain fraction of elongating RNA polymerases that pass through, resulting in locked ternary complexes. Cleavage of the nascent transcript by cleavage factors such as GreA or GreB allows the resumption of elongation from the new 3'terminus. GreA releases sequences of 2 to 3 nucleotides. In Rickettsia canadensis (strain McKiel), this protein is Transcription elongation factor GreA.